Consider the following 437-residue polypeptide: GTPase Obg (437 aa).

Residues Ser-2–Leu-160 enclose the Obg domain. Residues Ala-161–Ala-338 form the OBG-type G domain. Residues Gly-167–Ser-174, Phe-192–Val-196, Asp-214–Gly-217, Asn-284–Asp-287, and Ser-319–Leu-321 contribute to the GTP site. Mg(2+)-binding residues include Ser-174 and Thr-194. The OCT domain maps to Gly-359–Asp-437.

It belongs to the TRAFAC class OBG-HflX-like GTPase superfamily. OBG GTPase family. In terms of assembly, monomer. Requires Mg(2+) as cofactor.

Its subcellular location is the cytoplasm. In terms of biological role, an essential GTPase which binds GTP, GDP and possibly (p)ppGpp with moderate affinity, with high nucleotide exchange rates and a fairly low GTP hydrolysis rate. Plays a role in control of the cell cycle, stress response, ribosome biogenesis and in those bacteria that undergo differentiation, in morphogenesis control. The sequence is that of GTPase Obg from Streptococcus pyogenes serotype M5 (strain Manfredo).